The primary structure comprises 323 residues: Oligodendrocyte transcription factor 2 (323 aa).

Composition is skewed to polar residues over residues 1 to 13 and 27 to 45; these read MDSD…SRPS and KGSS…STPS. The disordered stretch occupies residues 1 to 107; it reads MDSDASLVSS…KKQMTEPELQ (107 aa). Low complexity predominate over residues 76–93; the sequence is KSSSSSTSSSTSSAAASS. The region spanning 108 to 162 is the bHLH domain; sequence QLRLKINSRERKRMHDLNIAMDGLREVMPYAHGPSVRKLSKIATLLLARNYILML.

As to quaternary structure, interacts with NKX2-2. Interacts with ZNF488. Expressed in the brain, in oligodendrocytes. Strongly expressed in oligodendrogliomas, while expression is weak to moderate in astrocytomas. Expression in glioblastomas highly variable.

Its subcellular location is the nucleus. The protein resides in the cytoplasm. In terms of biological role, required for oligodendrocyte and motor neuron specification in the spinal cord, as well as for the development of somatic motor neurons in the hindbrain. Functions together with ZNF488 to promote oligodendrocyte differentiation. Cooperates with OLIG1 to establish the pMN domain of the embryonic neural tube. Antagonist of V2 interneuron and of NKX2-2-induced V3 interneuron development. The sequence is that of Oligodendrocyte transcription factor 2 (OLIG2) from Homo sapiens (Human).